The following is a 374-amino-acid chain: Tomoregulin-2 (374 aa).

The N-terminal stretch at 1–39 (MVLWESPRQCSSWTLCEGFCWLLLLPVMLLIVARPVKLA) is a signal peptide. At 40–320 (AFPTSLSDCQ…VPGPVRFQYV (281 aa)) the chain is on the extracellular side. An N-linked (GlcNAc...) asparagine glycan is attached at Asn55. Kazal-like domains lie at 90–137 (VCQF…SCAT) and 181–229 (VCNI…RCQD). Cystine bridges form between Cys91-Cys121, Cys95-Cys114, Cys103-Cys135, Cys182-Cys213, Cys186-Cys206, Cys195-Cys227, Cys265-Cys278, Cys273-Cys289, and Cys291-Cys300. The EGF-like domain maps to 261-301 (HHIPCPEHYNGFCMHGKCEHSINMQEPSCRCDAGYTGQHCE). The tract at residues 303-320 (KDYSVLYVVPGPVRFQYV) is required for shedding. The chain crosses the membrane as a helical span at residues 321–341 (LIAAVIGTIQIAVICVVVLCI). Residues 342–374 (TRKCPRSNRIHRQKQNTGHYSSDNTTRASTRLI) lie on the Cytoplasmic side of the membrane. The interval 353 to 374 (RQKQNTGHYSSDNTTRASTRLI) is disordered. A compositionally biased stretch (polar residues) spans 356-374 (QNTGHYSSDNTTRASTRLI).

It belongs to the tomoregulin family. Post-translationally, O-glycosylated; contains chondroitin sulfate glycosaminoglycans. A soluble form (TMEFF2-ECD) is produced by proteolytic shedding. This shedding can be induced by phorbol ester or pro-inflammatory cytokines such as TNFalpha, and is mediated by a metalloproteinase ADAM.

The protein localises to the membrane. May be a survival factor for hippocampal and mesencephalic neurons. The shedded form may up-regulate cell proliferation. The protein is Tomoregulin-2 (TMEFF2) of Bos taurus (Bovine).